Here is an 83-residue protein sequence, read N- to C-terminus: Sec-independent protein translocase protein TatA (83 aa).

The helical transmembrane segment at M1–G21 threads the bilayer. Residues K34–Q83 are disordered. Residues T66–Q75 are compositionally biased toward pro residues.

This sequence belongs to the TatA/E family. The Tat system comprises two distinct complexes: a TatABC complex, containing multiple copies of TatA, TatB and TatC subunits, and a separate TatA complex, containing only TatA subunits. Substrates initially bind to the TatABC complex, which probably triggers association of the separate TatA complex to form the active translocon.

It is found in the cell inner membrane. Part of the twin-arginine translocation (Tat) system that transports large folded proteins containing a characteristic twin-arginine motif in their signal peptide across membranes. TatA could form the protein-conducting channel of the Tat system. This is Sec-independent protein translocase protein TatA from Novosphingobium aromaticivorans (strain ATCC 700278 / DSM 12444 / CCUG 56034 / CIP 105152 / NBRC 16084 / F199).